The following is a 432-amino-acid chain: Succinate--CoA ligase [GDP-forming] subunit beta, mitochondrial (432 aa).

Residues 1–37 constitute a mitochondrion transit peptide; sequence MAAPVGAQARKLLRDLVLRPPLLAARSQVVQLTSRRW. The 229-residue stretch at 46 to 274 folds into the ATP-grasp domain; that stretch reads KKLMSDNGVK…NAEFRQKDIF (229 aa). Residue Gln57 participates in GTP binding. Lys73 bears the N6-acetyllysine mark. An N6-succinyllysine modification is found at Lys78. Position 90 to 92 (90 to 92) interacts with GTP; the sequence is GRG. Lys111, Lys132, and Lys139 each carry N6-acetyllysine. A GTP-binding site is contributed by Leu146. At Ser161 the chain carries Phosphoserine. Lys200, Lys218, and Lys227 each carry N6-acetyllysine. Mg(2+) contacts are provided by Asn243 and Asp257. At Lys271 the chain carries N6-acetyllysine. Asn308 is a binding site for substrate. Lys338 bears the N6-succinyllysine mark. Residue Lys347 is modified to N6-acetyllysine. 365 to 367 serves as a coordination point for substrate; sequence GIV. Lys386 and Lys423 each carry N6-acetyllysine.

Belongs to the succinate/malate CoA ligase beta subunit family. GTP-specific subunit beta subfamily. As to quaternary structure, heterodimer of an alpha and a beta subunit. The beta subunit determines specificity for GTP. Requires Mg(2+) as cofactor.

Its subcellular location is the mitochondrion. The catalysed reaction is GTP + succinate + CoA = succinyl-CoA + GDP + phosphate. Its pathway is carbohydrate metabolism; tricarboxylic acid cycle; succinate from succinyl-CoA (ligase route): step 1/1. Its function is as follows. GTP-specific succinyl-CoA synthetase functions in the citric acid cycle (TCA), coupling the hydrolysis of succinyl-CoA to the synthesis of GTP and thus represents the only step of substrate-level phosphorylation in the TCA. The beta subunit provides nucleotide specificity of the enzyme and binds the substrate succinate, while the binding sites for coenzyme A and phosphate are found in the alpha subunit. The protein is Succinate--CoA ligase [GDP-forming] subunit beta, mitochondrial of Bos taurus (Bovine).